A 313-amino-acid polypeptide reads, in one-letter code: MLKMESTQQMVSSIINTSFEAAVVAATSTLELMGIQYDYNEVFTRVKSKFDYVMDDSGVKNNLLGKAITIAQALNGKFGSAIRNRNWMTDSKTVAKLDEDVSKLRMTLSSKGIDQKMRVLNACFSVKRIPGKSSSIIKCTRLMKDKIEGGEVEVDDSYVDEKMEIDTIDWKSRYDQLEKRFEALKQRVNEKYNTWVQKAKKVNENMYSLQNVISQQQNQISDLQQYCNKLEADLQGKFSSLVSSVEWYLRSMELPDDVKNDIEQQLNSIDAINPINAIDDIESLIRNLIQDYDRTFLMLKGLLKQCNYEYAYE.

Positions 1-149 are RNA-binding; the sequence is MLKMESTQQM…TRLMKDKIEG (149 aa). The tract at residues 150–206 is dimerization; that stretch reads GEVEVDDSYVDEKMEIDTIDWKSRYDQLEKRFEALKQRVNEKYNTWVQKAKKVNENM. A coiled-coil region spans residues 166–237; it reads DTIDWKSRYD…NKLEADLQGK (72 aa). The tract at residues 170 to 234 is interaction with host ZC3H7B; that stretch reads WKSRYDQLEK…QYCNKLEADL (65 aa). Residues 208 to 313 form an interaction with host EIF4G1 region; the sequence is SLQNVISQQQ…KQCNYEYAYE (106 aa).

Belongs to the rotavirus NSP3 family. In terms of assembly, homodimer. Interacts (via the coiled-coil region) with host ZC3H7B (via LD motif). Interacts with host EIF4G1.

The protein localises to the host cytoplasm. Plays an important role in stimulating the translation of viral mRNAs. These mRNAs are capped but not polyadenylated, instead terminating in a conserved sequence 'GACC' at the 3' that is recognized by NSP3, which competes with host PABPC1 for EIF4G1 binding. The interaction between NSP3 and host EIF4G1 stabilizes the EIF4E-EIF4G1 interaction, thereby facilitating the initiation of capped mRNA translation. The protein is Non-structural protein 3 of Homo sapiens (Human).